A 57-amino-acid chain; its full sequence is Large ribosomal subunit protein bL32B (57 aa).

The protein belongs to the bacterial ribosomal protein bL32 family.

In Listeria innocua serovar 6a (strain ATCC BAA-680 / CLIP 11262), this protein is Large ribosomal subunit protein bL32B (rpmF2).